Consider the following 327-residue polypeptide: DNA repair and recombination protein RadA (327 aa).

Residue 113–120 participates in ATP binding; it reads GEFGSGKS.

The protein belongs to the eukaryotic RecA-like protein family.

Functionally, involved in DNA repair and in homologous recombination. Binds and assemble on single-stranded DNA to form a nucleoprotein filament. Hydrolyzes ATP in a ssDNA-dependent manner and promotes DNA strand exchange between homologous DNA molecules. The protein is DNA repair and recombination protein RadA of Ignicoccus hospitalis (strain KIN4/I / DSM 18386 / JCM 14125).